Consider the following 329-residue polypeptide: MKTVLLFVVLVGLAYCDDDGWDMGNFFQQYHQWQQQISSSSSSSSSSSSGGGGSSGGGASGGGGGSSSGGGGASGGGGGGSSGGGGLTKVVLKAGGGGGGGFKSVGGGRGGVTKLVASGGASGGGSVSGGGGGSLALLAGGSAAGGGRSGVVTVSKQPIIINRQVTHVNTGGSGGGVGGGFGGGRGGFGYGLYGGYHHYNPCGYGQVYSYYYGCQSIYKQPARQVYHQPVYQPVQTVHQPVQYYQQPYQYQHSYGQPSYAYQPQTTKYISYSYPQYSSQGSYPTVAGGSAGGFVRGSSGGMGFSSGGIGGHSSYPLSVFKHAKGEKYKL.

Residues 1–16 (MKTVLLFVVLVGLAYC) form the signal peptide. Residues 38–48 (SSSSSSSSSSS) show a composition bias toward low complexity. A disordered region spans residues 38-80 (SSSSSSSSSSSSGGGGSSGGGASGGGGGSSSGGGGASGGGGGG). Positions 49–80 (SGGGGSSGGGASGGGGGSSSGGGGASGGGGGG) are enriched in gly residues.

Prismatic layer of shell (at protein level). Expressed primarily in the mantle with highest level in the mantle edge and lower level in the mantle pallium.

It localises to the secreted. This Pinctada maxima (Silver-lipped pearl oyster) protein is Serine, glycine and glutamine-rich protein.